The sequence spans 464 residues: MLPLRRSLLKPLQDVLRHSHRQMSQKNLLELTDRGFFHGIFPDTAAPRMKQLFTRGQQSIYAGFDPTADSLHVGNLLVIMGLIHCQRAGHRPIALVGGATGLIGDPSGRKTERNQLGETVIETNLKAIEQQLRRVFENHENCLWDSKKQKLPLAPLIIVNNADWYADLQLIDFVANMGRHFRMGSMLSRSSVQSRLESEDGMSFTEFTYQIFQAYDWLHLLRRHNCCFQMGGSDQTGNLMTGHELISRVERKREVFGLTLPLVTTEEGDKFGKSAGNAVWLDGNKTSPFALYQFFLRMPDSEVEKLLKLFTFIPLPQVEQLMREHTKEPEKRKAQTLLAEDVTLLVHGESGLKQAERVTNALYKGNVEGLAELNLSEIQQTFQGATMVNLLTEPGMSILELAMKAKCFPTETDAVRIINAGGFYVNQKRVQNIAEVLTTGVHILRNGISLLRVGKRNFYIVRWQ.

Position 61 (tyrosine 61) interacts with L-tyrosine. Aspartate 65 is an ATP binding site. The 'HIGH' region signature appears at 66–75 (PTADSLHVGN). 5 residues coordinate L-tyrosine: aspartate 105, tyrosine 209, glutamine 213, aspartate 216, and glutamine 235. The 'KMSKS' region signature appears at 270 to 274 (KFGKS). Lysine 273 lines the ATP pocket.

This sequence belongs to the class-I aminoacyl-tRNA synthetase family. In terms of assembly, homodimer.

The protein resides in the mitochondrion matrix. It catalyses the reaction tRNA(Tyr) + L-tyrosine + ATP = L-tyrosyl-tRNA(Tyr) + AMP + diphosphate + H(+). Functionally, catalyzes the attachment of tyrosine to tRNA(Tyr) in a two-step reaction: tyrosine is first activated by ATP to form Tyr-AMP and then transferred to the acceptor end of tRNA(Tyr). This Drosophila melanogaster (Fruit fly) protein is Tyrosine--tRNA ligase, mitochondrial.